A 542-amino-acid polypeptide reads, in one-letter code: 4-coumarate--CoA ligase 2 (542 aa).

ATP contacts are provided by Ser-189, Ser-190, Gly-191, Thr-192, Thr-193, and Lys-197. Positions 239 and 243 each coordinate (E)-4-coumaroyl-AMP. Tyr-239 and Ser-243 together coordinate (E)-caffeoyl-AMP. Positions 239 and 243 each coordinate (E)-feruloyl-AMP. Lys-260 provides a ligand contact to CoA. An SBD1 region spans residues 262–331 (DIVSFLELIQ…AKFPNAKLGQ (70 aa)). (E)-4-coumaroyl-AMP is bound at residue Ala-309. Ala-309 is a binding site for (E)-caffeoyl-AMP. Ala-309 serves as a coordination point for (E)-feruloyl-AMP. The ATP site is built by Gln-331, Gly-332, and Thr-336. Residues Gly-332, Thr-336, Met-344, Asp-420, Arg-435, Lys-437, and Lys-441 each coordinate (E)-4-coumaroyl-AMP. 7 residues coordinate (E)-caffeoyl-AMP: Gly-332, Thr-336, Met-344, Asp-420, Arg-435, Lys-437, and Lys-441. (E)-feruloyl-AMP-binding residues include Gly-332, Thr-336, Met-344, Asp-420, Arg-435, Lys-437, and Lys-441. Residues Gly-332 and Thr-336 each coordinate AMP. The tract at residues 332 to 399 (GYGMTEAGPV…IRGDQIMKGY (68 aa)) is SBD2. ATP is bound by residues Asp-420 and Arg-435. Asp-420 contributes to the AMP binding site. AMP contacts are provided by Lys-437 and Lys-441. CoA contacts are provided by Lys-443 and Gly-444. Gln-446 lines the AMP pocket. Lys-526 lines the ATP pocket.

Belongs to the ATP-dependent AMP-binding enzyme family. Mg(2+) serves as cofactor. In terms of tissue distribution, mainly expressed in old stems and, to a lower extent, in flowers (e.g. in ovary), leaves, young stems, shoot tips and patel limbs.

It carries out the reaction (E)-4-coumarate + ATP + CoA = (E)-4-coumaroyl-CoA + AMP + diphosphate. The enzyme catalyses (E)-caffeate + ATP + CoA = (E)-caffeoyl-CoA + AMP + diphosphate. It catalyses the reaction (E)-ferulate + ATP + CoA = (E)-feruloyl-CoA + AMP + diphosphate. The catalysed reaction is (E)-cinnamate + ATP + CoA = (E)-cinnamoyl-CoA + AMP + diphosphate. It carries out the reaction (E)-4-coumarate + ATP + H(+) = (E)-4-coumaroyl-AMP + diphosphate. The enzyme catalyses (E)-4-coumaroyl-AMP + CoA = (E)-4-coumaroyl-CoA + AMP + H(+). It catalyses the reaction (E)-caffeate + ATP + H(+) = (E)-caffeoyl-AMP + diphosphate. The catalysed reaction is (E)-caffeoyl-AMP + CoA = (E)-caffeoyl-CoA + AMP + H(+). It carries out the reaction (E)-ferulate + ATP + H(+) = (E)-feruloyl-AMP + diphosphate. The enzyme catalyses (E)-feruloyl-AMP + CoA = (E)-feruloyl-CoA + AMP + H(+). It participates in phytoalexin biosynthesis; 3,4',5-trihydroxystilbene biosynthesis; 3,4',5-trihydroxystilbene from trans-4-coumarate: step 1/2. Functionally, major enzyme of the phenylpropanoid pathway that mediates the production of several precursors for numerous metabolites and regulates carbon flow. Catalyzes the formation of CoA thioesters using 4-coumarate, ferulate, caffeate, and cinnamate as substrates. Follows a two-step reaction mechanism, wherein a (hydroxy)cinnamate substrate first undergoes adenylation by ATP leading to an acyl-AMP, followed by a thioesterification in the presence of CoA to yield the final (hydroxy)cinnamoyl-CoA product. Almost inactive toward sinapate. The chain is 4-coumarate--CoA ligase 2 from Nicotiana tabacum (Common tobacco).